The chain runs to 157 residues: Ubiquitin-like protein 4A (157 aa).

The region spanning 1-76 (MQLTVKALQG…LNLVVKPLEK (76 aa)) is the Ubiquitin-like domain. Lysine 48 is covalently cross-linked (Glycyl lysine isopeptide (Lys-Gly) (interchain with G-Cter in ubiquitin)). Serine 90 bears the Phosphoserine mark. Residues 96 to 138 (WQLISKVLARHFSVADASRVLEQLQRDYDRSLSRLTLDDIERL) form a required and sufficient for interaction with BAG6 region.

As to quaternary structure, component of the BAG6/BAT3 complex, at least composed of BAG6, UBL4A and GET4/TRC35. Interacts with BAG6; the interaction is direct and required for UBL4A protein stability. Interacts with USP13; may be indirect via BAG6. Polyubiquitinated. Ubiquitination by AMFR and deubiquitination by USP13 may regulate the interaction between the BAG6/BAT3 complex and SGTA and therefore may regulate client proteins fate.

It is found in the cytoplasm. The protein resides in the cytosol. It localises to the nucleus. Functionally, as part of a cytosolic protein quality control complex, the BAG6/BAT3 complex, maintains misfolded and hydrophobic patches-containing proteins in a soluble state and participates in their proper delivery to the endoplasmic reticulum or alternatively can promote their sorting to the proteasome where they undergo degradation. The BAG6/BAT3 complex is involved in the post-translational delivery of tail-anchored/type II transmembrane proteins to the endoplasmic reticulum membrane. Recruited to ribosomes, it interacts with the transmembrane region of newly synthesized tail-anchored proteins and together with SGTA and ASNA1 mediates their delivery to the endoplasmic reticulum. Client proteins that cannot be properly delivered to the endoplasmic reticulum are ubiquitinated and sorted to the proteasome. Similarly, the BAG6/BAT3 complex also functions as a sorting platform for proteins of the secretory pathway that are mislocalized to the cytosol either delivering them to the proteasome for degradation or to the endoplasmic reticulum. The BAG6/BAT3 complex also plays a role in the endoplasmic reticulum-associated degradation (ERAD), a quality control mechanism that eliminates unwanted proteins of the endoplasmic reticulum through their retrotranslocation to the cytosol and their targeting to the proteasome. It maintains these retrotranslocated proteins in an unfolded yet soluble state condition in the cytosol to ensure their proper delivery to the proteasome. This is Ubiquitin-like protein 4A from Mus musculus (Mouse).